A 562-amino-acid chain; its full sequence is IRK-interacting protein (562 aa).

Disordered stretches follow at residues 29–61 (ASLM…RPLP) and 303–322 (VVSQ…SEMP). Residues 36–61 (SSPSSNYSLRNPSSSSAASPASRPLP) show a composition bias toward low complexity. The stretch at 246 to 306 (SGVEKLKREL…LREATEVVSQ (61 aa)) forms a coiled coil.

As to quaternary structure, interacts with IRK. In terms of tissue distribution, highly expressed in root tips, shoot apices and developing flowers.

In Arabidopsis thaliana (Mouse-ear cress), this protein is IRK-interacting protein.